A 160-amino-acid chain; its full sequence is MTLEELVACDNAAQKMQTVSAAVEELLVAAQLQDRLTVGVYESAKLMNVDPDSVVLCLLAIDEEEEDDIALQIHFTLIQSFCCENDIDIVRVSGMQRLAQLLGEPAETQGTTEARDLHCLLVTNPHTDTWKSHGLVEVASYCEESRGNNQWVPYISLQER.

Belongs to the GADD45 family. As to quaternary structure, interacts with GADD45GIP1.

Involved in the regulation of growth and apoptosis. Mediates activation of stress-responsive MTK1/MEKK4 MAPKKK. This chain is Growth arrest and DNA damage-inducible protein GADD45 beta (GADD45B), found in Bos taurus (Bovine).